Consider the following 220-residue polypeptide: Putative glutathione S-transferase C460.02c (220 aa).

A GST N-terminal domain is found at Met-1 to Asp-81. In terms of domain architecture, GST C-terminal spans Asn-89–Thr-216.

This sequence belongs to the GST superfamily.

The protein resides in the cytoplasm. It carries out the reaction RX + glutathione = an S-substituted glutathione + a halide anion + H(+). Involved in the oxidative stress response and detoxification. This Schizosaccharomyces pombe (strain 972 / ATCC 24843) (Fission yeast) protein is Putative glutathione S-transferase C460.02c.